The sequence spans 64 residues: Large ribosomal subunit protein uL30 (64 aa).

The tract at residues 1-22 (MAKAAKTIKVEQTGSAIRRHHS) is disordered.

It belongs to the universal ribosomal protein uL30 family. In terms of assembly, part of the 50S ribosomal subunit.

This chain is Large ribosomal subunit protein uL30, found in Nitrobacter winogradskyi (strain ATCC 25391 / DSM 10237 / CIP 104748 / NCIMB 11846 / Nb-255).